The chain runs to 325 residues: Beta-ketoacyl-[acyl-carrier-protein] synthase III (325 aa).

Catalysis depends on residues Cys-112 and His-250. The ACP-binding stretch occupies residues 251-255; that stretch reads QANSR. Asn-280 is a catalytic residue.

This sequence belongs to the thiolase-like superfamily. FabH family. In terms of assembly, homodimer.

It localises to the cytoplasm. It carries out the reaction malonyl-[ACP] + acetyl-CoA + H(+) = 3-oxobutanoyl-[ACP] + CO2 + CoA. The protein operates within lipid metabolism; fatty acid biosynthesis. In terms of biological role, catalyzes the condensation reaction of fatty acid synthesis by the addition to an acyl acceptor of two carbons from malonyl-ACP. Catalyzes the first condensation reaction which initiates fatty acid synthesis and may therefore play a role in governing the total rate of fatty acid production. Possesses both acetoacetyl-ACP synthase and acetyl transacylase activities. Its substrate specificity determines the biosynthesis of branched-chain and/or straight-chain of fatty acids. This chain is Beta-ketoacyl-[acyl-carrier-protein] synthase III, found in Lactococcus lactis subsp. lactis (strain IL1403) (Streptococcus lactis).